The following is a 138-amino-acid chain: NADH-quinone oxidoreductase subunit A (138 aa).

Helical transmembrane passes span 8 to 28, 63 to 83, and 93 to 113; these read FGAV…GYLT, FYVV…LFPW, and FALI…AYAW.

Belongs to the complex I subunit 3 family. In terms of assembly, NDH-1 is composed of 14 different subunits. Subunits NuoA, H, J, K, L, M, N constitute the membrane sector of the complex.

The protein resides in the cell inner membrane. The catalysed reaction is a quinone + NADH + 5 H(+)(in) = a quinol + NAD(+) + 4 H(+)(out). NDH-1 shuttles electrons from NADH, via FMN and iron-sulfur (Fe-S) centers, to quinones in the respiratory chain. The immediate electron acceptor for the enzyme in this species is believed to be a menaquinone. Couples the redox reaction to proton translocation (for every two electrons transferred, four hydrogen ions are translocated across the cytoplasmic membrane), and thus conserves the redox energy in a proton gradient. This is NADH-quinone oxidoreductase subunit A from Prosthecochloris aestuarii (strain DSM 271 / SK 413).